Here is a 555-residue protein sequence, read N- to C-terminus: MADTETDQGLNKKLSFSFCEEDTESEGQMTAQDIGGAQSQKPGREESEELEGPVPPTRDELHTSLSRDKESPGPDLWKSVSGPPKCPETPVLHSKSKLPVPTNFSTPKNSLGQPEISLLEKLSSRSSRHMRLTPASLMDEKTSLSLVNINPFTPETYRKLLLQSKGKRKTRDYLEETGEEESKSVQWLPAKRSILQETNMASRYEKEFFEIEKIGVGEFGTVYKCIKRLDGCIYAIKRSAKSFSGLSNELDLHEVYAHAVLGHHPHVVRYYSSWIEDDHVVIQNEYCNGGSLQAAISENTASNNHFQEPKLKDILLQISLGLKYIHNSGMVHLDIKPSNIFICHKMQCDSPVGPEEAESEADWFLNASVMYKIGDLGHATSISKPKVEEGDTRFLANEILQENYQHLPKADIFALGLTIAVAAGAESLPINGDMWHHIRKGNFPEISQELSDDFYGLLKNMIHPAPKERPSAAALARSRILWPFLEKTDELQKQLNLEKSKTATLKRELKKARHIQTPQREVHHCYYQICKGSRHLLVGGRRKAPSSFTRGTSSV.

The disordered stretch occupies residues 1-112 (MADTETDQGL…NFSTPKNSLG (112 aa)). Serine 15 is modified (phosphoserine; by CaMK2 and PKA). Residues 26-41 (EGQMTAQDIGGAQSQK) show a composition bias toward polar residues. The span at 57–72 (TRDELHTSLSRDKESP) shows a compositional bias: basic and acidic residues. Serine 71 bears the Phosphoserine mark. Positions 102-112 (TNFSTPKNSLG) are enriched in polar residues. The short motif at 167–169 (KRK) is the Nuclear localization signal element. Residues 208–485 (FFEIEKIGVG…ARSRILWPFL (278 aa)) form the Protein kinase domain. Residues 214–222 (IGVGEFGTV) and lysine 237 each bind ATP. Residues 310–324 (KLKDILLQISLGLKY) carry the Nuclear export signal motif. The active-site Proton acceptor is aspartate 334. Mg(2+)-binding residues include asparagine 339 and aspartate 375. Residues 488 to 514 (TDELQKQLNLEKSKTATLKRELKKARH) adopt a coiled-coil conformation.

This sequence belongs to the protein kinase superfamily. Ser/Thr protein kinase family. WEE1 subfamily. In terms of processing, phosphorylated by PKA at Ser-15 in vitro, leading to activate kinase activity. Phosphorylation at Ser-15 by CaMK2, leading to increase its activity and promote metaphase II exit during egg activation. Ovary-specific.

The protein resides in the cytoplasm. It localises to the nucleus. It carries out the reaction L-tyrosyl-[protein] + ATP = O-phospho-L-tyrosyl-[protein] + ADP + H(+). Oocyte-specific protein tyrosine kinase that phosphorylates and inhibits CDK1 and acts as a key regulator of meiosis during both prophase I and metaphase II. Required to maintain meiotic arrest in oocytes during the germinal vesicle (GV) stage, a long period of quiescence at dictyate prophase I, by phosphorylating CDK1 at 'Tyr-15', leading to inhibit CDK1 activity and prevent meiotic reentry. Also required for metaphase II exit during egg activation by phosphorylating CDK1 at 'Tyr-15', to ensure exit from meiosis in oocytes and promote pronuclear formation. This Mus musculus (Mouse) protein is Wee1-like protein kinase 2 (Wee2).